Consider the following 220-residue polypeptide: Charged multivesicular body protein 2a (220 aa).

Coiled-coil stretches lie at residues 12 to 53 (EEML…MAKQ) and 199 to 220 (PSAALADADADLEERLNNLRRD). Residues 179–208 (LSNLPSTGGSLSVAGAKKGEPSAALADADA) form a disordered region. The MIT-interacting motif signature appears at 208-218 (ADLEERLNNLR).

The protein belongs to the SNF7 family. In terms of assembly, probable core component of the endosomal sorting required for transport complex III (ESCRT-III). ESCRT-III components are thought to multimerize to form a flat lattice on the perimeter membrane of the endosome.

It is found in the late endosome membrane. The protein localises to the cytoplasm. In terms of biological role, probable core component of the endosomal sorting required for transport complex III (ESCRT-III) which is involved in multivesicular bodies (MVBs) formation and sorting of endosomal cargo proteins into MVBs. MVBs contain intraluminal vesicles (ILVs) that are generated by invagination and scission from the limiting membrane of the endosome and mostly are delivered to lysosomes enabling degradation of membrane proteins, such as stimulated growth factor receptors, lysosomal enzymes and lipids. The sequence is that of Charged multivesicular body protein 2a (chmp2a) from Xenopus tropicalis (Western clawed frog).